The sequence spans 494 residues: Ribosomal lysine N-methyltransferase 4 (494 aa).

Positions 25–265 (PKIEIKDLCC…KNEQVYNIYG (241 aa)) constitute an SET domain. S-adenosyl-L-methionine is bound at residue tyrosine 264.

The protein belongs to the class V-like SAM-binding methyltransferase superfamily. Histone-lysine methyltransferase family. SETD6 subfamily.

Its subcellular location is the nucleus. Its function is as follows. S-adenosyl-L-methionine-dependent protein-lysine N-methyltransferase that monomethylates 60S ribosomal protein L42 (RPL42A and RPL42B) at 'Lys-55'. The polypeptide is Ribosomal lysine N-methyltransferase 4 (Saccharomyces cerevisiae (strain ATCC 204508 / S288c) (Baker's yeast)).